The chain runs to 99 residues: Small ribosomal subunit protein bS20 (99 aa).

It belongs to the bacterial ribosomal protein bS20 family.

In terms of biological role, binds directly to 16S ribosomal RNA. The protein is Small ribosomal subunit protein bS20 of Caldicellulosiruptor saccharolyticus (strain ATCC 43494 / DSM 8903 / Tp8T 6331).